A 464-amino-acid chain; its full sequence is Soluble pyridine nucleotide transhydrogenase (464 aa).

35 to 44 (DSRRQVGGNC) is an FAD binding site.

The protein belongs to the class-I pyridine nucleotide-disulfide oxidoreductase family. FAD is required as a cofactor.

It localises to the cytoplasm. The enzyme catalyses NAD(+) + NADPH = NADH + NADP(+). Functionally, conversion of NADPH, generated by peripheral catabolic pathways, to NADH, which can enter the respiratory chain for energy generation. The sequence is that of Soluble pyridine nucleotide transhydrogenase from Pseudomonas fluorescens (strain ATCC BAA-477 / NRRL B-23932 / Pf-5).